Reading from the N-terminus, the 340-residue chain is KH domain-containing RNA-binding protein QKI (340 aa).

The 67-residue stretch at 87–153 (YVPVKEYPDF…WEHLNEDLHV (67 aa)) folds into the KH domain. The SH3-binding signature appears at 275 to 278 (PPGP). The Nuclear localization signal motif lies at 323-329 (RVHPYQR).

The protein belongs to the quaking family. As to quaternary structure, homodimer; does not require RNA to homodimerize.

The protein localises to the cytoplasm. It is found in the nucleus. Functionally, RNA reader protein, which recognizes and binds specific RNAs, thereby regulating RNA metabolic processes, such as pre-mRNA splicing, circular RNA (circRNA) formation, mRNA export, mRNA stability and/or translation. Involved in various cellular processes, such as mRNA storage into stress granules, apoptosis, interferon response, glial cell fate and development. Binds to the 5'-NACUAAY-N(1,20)-UAAY-3' RNA core sequence. Acts as a mRNA modification reader that specifically recognizes and binds mRNA transcripts modified by internal N(7)-methylguanine (m7G). Promotes the formation of circular RNAs (circRNAs): acts by binding to sites flanking circRNA-forming exons. CircRNAs are produced by back-splicing circularization of pre-mRNAs. Required to protect and promote stability of mRNAs which promotes oligodendrocyte differentiation. Acts as an important regulator of muscle development. This chain is KH domain-containing RNA-binding protein QKI, found in Gallus gallus (Chicken).